A 3373-amino-acid polypeptide reads, in one-letter code: Intermembrane lipid transfer protein vps13A (3373 aa).

The Chorein N-terminal domain occupies 3–119 (FEGLVSDVLS…QAELKKKKLE (117 aa)). 5 disordered regions span residues 818–858 (PKAT…VNSS), 1028–1096 (VPIN…KTAS), 1259–1304 (NNNK…DLEK), 1648–1729 (DPSI…EEEK), and 1872–1913 (QKKR…GKKD). Positions 823–839 (TPINDSNSPSSVSPKLI) are enriched in polar residues. Composition is skewed to low complexity over residues 840–858 (STSPHSFSSSSAPVDVNSS) and 1048–1066 (SSPNQQSPNQQSPNQQSPQ). 2 stretches are compositionally biased toward basic and acidic residues: residues 1263-1274 (SIEKSKSIDSKL) and 1288-1304 (RSDDNHEKSERELDLEK). Low complexity-rich tracts occupy residues 1659–1685 (QQQQQQSSSSSFIPSQQQQQQKVRSQS), 1695–1716 (SSIGGKESKTISSSISNNSLSS), and 1884–1898 (SSSTSLPSLNKSTNS). Residues 1899 to 1909 (FQTSTSGNSNS) are compositionally biased toward polar residues. One can recognise an SHR-BD domain in the interval 2405 to 2706 (TLSFYCQYWL…CYGWDEPSAE (302 aa)). The disordered stretch occupies residues 2909–2933 (RGNNASNNNNNNGMTSSQMRQSGSG). Low complexity predominate over residues 2911 to 2920 (NNASNNNNNN).

The protein belongs to the VPS13 family.

Its subcellular location is the membrane. In terms of biological role, mediates the transfer of lipids between membranes at organelle contact sites. This Dictyostelium discoideum (Social amoeba) protein is Intermembrane lipid transfer protein vps13A (vps13A).